A 159-amino-acid polypeptide reads, in one-letter code: Nudix hydrolase DR_1025 (159 aa).

Residues M1, R14, and S49 each contribute to the Mg(2+) site. An ATP-binding site is contributed by 1–6; that stretch reads MEHDER. The Nudix hydrolase domain occupies 11–144; sequence VELRAAGVVL…QIRMYQTKLF (134 aa). ATP is bound at residue 50-51; the sequence is GA. Residues 50–71 carry the Nudix box motif; it reads GAVEDGENPQDAAVREACEETG. The Mg(2+) site is built by E53 and E65. 87–89 is a binding site for ATP; sequence FPD. R95 is a binding site for Mg(2+).

This sequence belongs to the Nudix hydrolase family. In terms of assembly, homodimer. Mg(2+) is required as a cofactor.

The catalysed reaction is 8-oxo-dGTP + H2O = 8-oxo-dGDP + phosphate + H(+). It catalyses the reaction 8-oxo-GTP + H2O = 8-oxo-GDP + phosphate + H(+). It carries out the reaction P(1),P(4)-bis(5'-adenosyl) tetraphosphate + H2O = AMP + ATP + 2 H(+). Hydrolase that can act as a nucleoside triphosphatase and a dinucleoside polyphosphate pyrophosphatase. The best substrates are 8-oxo-dGTP and 8-oxo-GTP. Other substrates include Ap4A, dGTP and GTP. May be involved in protection from damage caused by radiation. The chain is Nudix hydrolase DR_1025 from Deinococcus radiodurans (strain ATCC 13939 / DSM 20539 / JCM 16871 / CCUG 27074 / LMG 4051 / NBRC 15346 / NCIMB 9279 / VKM B-1422 / R1).